Here is a 104-residue protein sequence, read N- to C-terminus: L-rhamnose mutarotase (104 aa).

Position 18 (Tyr18) interacts with substrate. Catalysis depends on His22, which acts as the Proton donor. Residues Tyr41 and Trp76–Trp77 contribute to the substrate site.

Belongs to the rhamnose mutarotase family. In terms of assembly, homodimer.

Its subcellular location is the cytoplasm. The enzyme catalyses alpha-L-rhamnose = beta-L-rhamnose. It participates in carbohydrate metabolism; L-rhamnose metabolism. In terms of biological role, involved in the anomeric conversion of L-rhamnose. The polypeptide is L-rhamnose mutarotase (Escherichia coli O127:H6 (strain E2348/69 / EPEC)).